The chain runs to 225 residues: MTAAAYRNTLLSLLCLTAGIVDVIGYLSLGHVFTANMTGNIVLLGLAIGKSIQVTVFNSLTALIGFICGVIIATLMVGKAENTLWPSAVTKALALEAFILFVFACLSFYRAFVPVHILIILMSISMGIQTTAAKKLGIAGISSTVLTGTLASLLEDISGRLFFKKQKKTFLRDTVLRALAIILYCVGAIIVALAEPDFYHFIIWVPIVLIFGIMMTAKLKLSGEK.

6 consecutive transmembrane segments (helical) span residues 10 to 30 (LLSL…LSLG), 56 to 76 (VFNS…ATLM), 99 to 119 (ILFV…HILI), 137 to 157 (GIAG…LEDI), 174 to 194 (TVLR…VALA), and 197 to 217 (DFYH…MMTA).

It belongs to the UPF0700 family.

The protein localises to the cell membrane. In Bacillus subtilis (strain 168), this protein is UPF0700 transmembrane protein YoaK (yoaK).